Consider the following 1232-residue polypeptide: Chromosome-associated kinesin KIF4A (1232 aa).

Residues 9 to 336 (PVRVALRCRP…LRYADRARKI (328 aa)) form the Kinesin motor domain. 88 to 95 (GQTGSGKT) is an ATP binding site. A coiled-coil region spans residues 350 to 999 (ELNHLKQQVQ…IKQKLTLLQV (650 aa)). Serine 394 is modified (phosphoserine). The disordered stretch occupies residues 496 to 515 (AQVETSPETSRSSDAFTTQH). Polar residues predominate over residues 497–515 (QVETSPETSRSSDAFTTQH). The tract at residues 663–1232 (QWKQKKDKEV…GCSPIEEEAH (570 aa)) is required for the interaction with PRC1. A Nuclear localization signal motif is present at residues 793–798 (PKLRRR). Phosphothreonine is present on threonine 799. A phosphoserine mark is found at serine 801, serine 810, serine 815, and serine 951. Threonine 995 carries the post-translational modification Phosphothreonine. Residues 1000 to 1232 (ASRQKHLPKD…GCSPIEEEAH (233 aa)) are globular. A phosphoserine mark is found at serine 1001, serine 1013, serine 1017, serine 1028, and serine 1126. Residues 1086-1144 (CSCKGWCGNKQCGCRKQKSDCGVDCCCDPTKCRNRQQGKDSLGTVERTQDSEGSFKLED) are CRD; required for [4Fe-4S] cluster binding and localization to the spindle midzone and midbody during anaphase and telophase. The tract at residues 1122-1142 (QGKDSLGTVERTQDSEGSFKL) is disordered. Basic and acidic residues predominate over residues 1132-1142 (RTQDSEGSFKL). Threonine 1181 is modified (phosphothreonine). Serine 1186 carries the phosphoserine modification. Residue lysine 1194 forms a Glycyl lysine isopeptide (Lys-Gly) (interchain with G-Cter in SUMO2) linkage. Residue serine 1225 is modified to Phosphoserine.

This sequence belongs to the TRAFAC class myosin-kinesin ATPase superfamily. Kinesin family. Chromokinesin subfamily. Interacts with the cytosolic iron-sulfur protein assembly (CIA) complex components CIAO2B and MMS19; the interactions facilitate the transfer of Fe-S clusters to KIF4A to ensure proper localization of KIF4A to mitotic machinery components. Interacts (via C-terminus) with unphosphorylated PRC1 (via N-terminus); the interaction is required for the progression of mitosis. The cofactor is [2Fe-2S] cluster. [4Fe-4S] cluster is required as a cofactor. In terms of tissue distribution, highly expressed in hematopoietic tissues, fetal liver, spleen, thymus and adult thymus and bone marrow. Lower levels are found in heart, testis, kidney, colon and lung.

It localises to the nucleus matrix. It is found in the cytoplasm. The protein localises to the cytoskeleton. Its subcellular location is the spindle. The protein resides in the midbody. It localises to the chromosome. In terms of biological role, iron-sulfur (Fe-S) cluster binding motor protein that has a role in chromosome segregation during mitosis. Translocates PRC1 to the plus ends of interdigitating spindle microtubules during the metaphase to anaphase transition, an essential step for the formation of an organized central spindle midzone and midbody and for successful cytokinesis. May play a role in mitotic chromosomal positioning and bipolar spindle stabilization. In Homo sapiens (Human), this protein is Chromosome-associated kinesin KIF4A (KIF4A).